A 411-amino-acid polypeptide reads, in one-letter code: Alpha-N-acetylgalactosaminidase (411 aa).

Residues 1 to 17 (MLLKTVLLLGHVAQVLM) form the signal peptide. 2 disulfide bridges follow: cysteine 38-cysteine 80 and cysteine 42-cysteine 49. Residue 78-79 (DD) participates in substrate binding. Residue asparagine 124 is glycosylated (N-linked (GlcNAc...) asparagine). Residues cysteine 127 and cysteine 158 are joined by a disulfide bond. Lysine 154 serves as a coordination point for substrate. The active-site Nucleophile is the aspartate 156. A glycan (N-linked (GlcNAc...) asparagine) is linked at asparagine 177. A disulfide bridge links cysteine 187 with cysteine 209. Residue serine 188 participates in substrate binding. Asparagine 201 is a glycosylation site (N-linked (GlcNAc...) asparagine). Residues arginine 213 and aspartate 217 each contribute to the substrate site. The active-site Proton donor is the aspartate 217. Residues serine 322 and serine 332 each carry the phosphoserine modification. 2 N-linked (GlcNAc...) asparagine glycosylation sites follow: asparagine 359 and asparagine 385.

This sequence belongs to the glycosyl hydrolase 27 family. As to quaternary structure, homodimer.

The protein localises to the lysosome. It catalyses the reaction Cleavage of non-reducing alpha-(1-&gt;3)-N-acetylgalactosamine residues from human blood group A and AB mucin glycoproteins, Forssman hapten and blood group A lacto series glycolipids.. The enzyme catalyses a neolactoside IV(3)-alpha-GalNAc,IV(2)-alpha-Fuc-nLc4Cer(d18:1(4E)) + H2O = a neolactoside IV(2)-alpha-Fuc-nLc4Cer(d18:1(4E)) + N-acetyl-alpha-D-galactosamine. It carries out the reaction a neolactoside IV(3)-alpha-GalNAc,IV(2)-alpha-Fuc-nLc4Cer(d18:0) + H2O = a neolactoside IV(2)-alpha-Fuc-nLc4Cer(d18:0) + N-acetyl-alpha-D-galactosamine. The catalysed reaction is a globoside IV3GalNAc-Gb4Cer + H2O = N-acetyl-alpha-D-galactosamine + a globoside Gb4Cer. Functionally, removes terminal alpha-N-acetylgalactosamine residues from glycolipids and glycopeptides. Required for the breakdown of glycolipids. The chain is Alpha-N-acetylgalactosaminidase from Homo sapiens (Human).